The following is a 362-amino-acid chain: Phosphoserine aminotransferase (362 aa).

L-glutamate is bound by residues Ser-9 and Arg-42. Residues 76–77 (GR), Trp-102, Thr-153, Asp-174, and Gln-197 each bind pyridoxal 5'-phosphate. The residue at position 198 (Lys-198) is an N6-(pyridoxal phosphate)lysine. 239-240 (NT) contacts pyridoxal 5'-phosphate.

Belongs to the class-V pyridoxal-phosphate-dependent aminotransferase family. SerC subfamily. In terms of assembly, homodimer. Requires pyridoxal 5'-phosphate as cofactor.

Its subcellular location is the cytoplasm. The catalysed reaction is O-phospho-L-serine + 2-oxoglutarate = 3-phosphooxypyruvate + L-glutamate. The enzyme catalyses 4-(phosphooxy)-L-threonine + 2-oxoglutarate = (R)-3-hydroxy-2-oxo-4-phosphooxybutanoate + L-glutamate. It participates in amino-acid biosynthesis; L-serine biosynthesis; L-serine from 3-phospho-D-glycerate: step 2/3. The protein operates within cofactor biosynthesis; pyridoxine 5'-phosphate biosynthesis; pyridoxine 5'-phosphate from D-erythrose 4-phosphate: step 3/5. Functionally, catalyzes the reversible conversion of 3-phosphohydroxypyruvate to phosphoserine and of 3-hydroxy-2-oxo-4-phosphonooxybutanoate to phosphohydroxythreonine. The polypeptide is Phosphoserine aminotransferase (Escherichia coli (strain ATCC 8739 / DSM 1576 / NBRC 3972 / NCIMB 8545 / WDCM 00012 / Crooks)).